The sequence spans 508 residues: Probable cytosol aminopeptidase (508 aa).

Positions 274 and 279 each coordinate Mn(2+). Residue K286 is part of the active site. Positions 297, 356, and 358 each coordinate Mn(2+). Residue R360 is part of the active site.

It belongs to the peptidase M17 family. Mn(2+) serves as cofactor.

The protein resides in the cytoplasm. It catalyses the reaction Release of an N-terminal amino acid, Xaa-|-Yaa-, in which Xaa is preferably Leu, but may be other amino acids including Pro although not Arg or Lys, and Yaa may be Pro. Amino acid amides and methyl esters are also readily hydrolyzed, but rates on arylamides are exceedingly low.. The catalysed reaction is Release of an N-terminal amino acid, preferentially leucine, but not glutamic or aspartic acids.. Its function is as follows. Presumably involved in the processing and regular turnover of intracellular proteins. Catalyzes the removal of unsubstituted N-terminal amino acids from various peptides. The polypeptide is Probable cytosol aminopeptidase (Paraburkholderia phytofirmans (strain DSM 17436 / LMG 22146 / PsJN) (Burkholderia phytofirmans)).